A 644-amino-acid polypeptide reads, in one-letter code: Alkyldihydroxyacetonephosphate synthase, peroxisomal (644 aa).

The transit peptide at 1–44 (MAEAAGEAGASERDPDAVRARRRLRVLSGHLLGRPQEAPSTNEC) directs the protein to the peroxisome. Positions 1-70 (MAEAAGEAGA…PAAPESGTIP (70 aa)) are disordered. A compositionally biased stretch (basic and acidic residues) spans 10–19 (ASERDPDAVR). Residues 49–64 (AASAAGASPAASPAAP) are compositionally biased toward low complexity. 2 positions are modified to phosphoserine: serine 51 and serine 56. At lysine 88 the chain carries N6-acetyllysine. Residues 188–370 (FERIPDIVVW…TEATIKIRPT (183 aa)) enclose the FAD-binding PCMH-type domain. Residues 220-226 (PIGGGTS), 289-295 (DSLEFSI), and 302-305 (TRAS) contribute to the FAD site. Position 333 is an N6-acetyllysine (lysine 333). 354–360 (EGTLGVI) lines the FAD pocket. Residue arginine 501 participates in substrate binding. Tyrosine 564 acts as the Proton donor/acceptor in catalysis. Important for enzyme activity regions lie at residues 601–603 (HHH) and 640–644 (NRNLL).

The protein belongs to the FAD-binding oxidoreductase/transferase type 4 family. Homodimer. It depends on FAD as a cofactor.

The protein localises to the peroxisome membrane. The protein resides in the peroxisome. It carries out the reaction a long chain fatty alcohol + a 1-acylglycerone 3-phosphate = a 1-O-alkylglycerone 3-phosphate + a long-chain fatty acid + H(+). It catalyses the reaction hexadecan-1-ol + 1-hexadecanoylglycerone 3-phosphate = 1-O-hexadecylglycerone 3-phosphate + hexadecanoate + H(+). The catalysed reaction is 1-hexadecanoylglycerone 3-phosphate + a long-chain fatty acid = a 1-acylglycerone 3-phosphate + hexadecanoate. It participates in glycerolipid metabolism; ether lipid biosynthesis. Inhibited by divalent cation Mg(2+). Functionally, catalyzes the exchange of the acyl chain in acyl-dihydroxyacetonephosphate (acyl-DHAP) for a long chain fatty alcohol, yielding the first ether linked intermediate, i.e. alkyl-dihydroxyacetonephosphate (alkyl-DHAP), in the pathway of ether lipid biosynthesis. This Rattus norvegicus (Rat) protein is Alkyldihydroxyacetonephosphate synthase, peroxisomal (Agps).